Consider the following 125-residue polypeptide: Aspercryptin biosynthesis cluster protein K (125 aa).

A disordered region spans residues Gln104–Tyr125. The segment covering Ser113–Tyr125 has biased composition (basic and acidic residues).

The protein operates within secondary metabolite biosynthesis. Its function is as follows. Part of the gene cluster that mediates the biosynthesis of aspercryptins, linear lipopeptides built from six amino acids including 2 highly unusual and nonproteogenic amino acids, 2-amino-octanoic acid (2aoa) and 2-amino-dodecanol (2adol). The core structure of aspercryptins is as follows: Ser/Ala-Thr-Ile/Val-2aoa-Asn-2adol. The first step of aspercryptin biosynthesis is the generation of the fatty acid precursors, octanoic and dodecanoic acids, by the FAS subunits atnF and atnM. The fatty acid precursors are likely transformed into the corresponding alpha-amino fatty acids in three steps. First, they are hydroxylated by the cytochrome P450 monooxygenase atnE, then oxidized to the corresponding alpha-keto acids by the NAD(P)-dependent oxidoreductase atnD, and finally converted to the alpha-amino fatty acids by the PLP-dependent aminotransferases atnH or atnJ. the alpha-amino fatty acids, 2-amino-octanoic and 2-amino-dodecanoic acids, are recognized, activated, and covalently tethered to the NRPS atnA by its fourth and sixth adenylation domains. The second module of atnA is the Thr module and contains an epimerase (E) domain responsible for the epimerization of Thr to D-allo-Thr. Additionally, despite atnA having only one epimerase domain, the first amino acid of aspercryptin A1 is D-Ser, suggesting that serine is either loaded directly as D-Ser on the first module or that the epimerase domain in the threonine module epimerizes both L-Ser and L-Thr. After condensation of the hexapeptide of aspercryptin, the C-terminal reductase (TE) domain might be involved in the reductive release and production of the aldehyde hexapeptide. Further reduction would generate aspercryptins. The variety of aspercryptins produced reflects the flexibility of the atnA NRPS, allowing incorporation of alanine instead of serine, valine for isoleucine, and a C10 fatty amino alcohol instead of the C12 version. AtnB seems to be involved in the selectivity for Ile versus Val by the third module. Moreover, type B, C and D aspercryptins have an additional N-terminal cichorine, acetyl and propionyl group respectively. The chain is Aspercryptin biosynthesis cluster protein K from Emericella nidulans (strain FGSC A4 / ATCC 38163 / CBS 112.46 / NRRL 194 / M139) (Aspergillus nidulans).